Reading from the N-terminus, the 200-residue chain is 3-isopropylmalate dehydratase small subunit (200 aa).

It belongs to the LeuD family. LeuD type 1 subfamily. Heterodimer of LeuC and LeuD.

It carries out the reaction (2R,3S)-3-isopropylmalate = (2S)-2-isopropylmalate. It functions in the pathway amino-acid biosynthesis; L-leucine biosynthesis; L-leucine from 3-methyl-2-oxobutanoate: step 2/4. Functionally, catalyzes the isomerization between 2-isopropylmalate and 3-isopropylmalate, via the formation of 2-isopropylmaleate. The sequence is that of 3-isopropylmalate dehydratase small subunit from Pseudarthrobacter chlorophenolicus (strain ATCC 700700 / DSM 12829 / CIP 107037 / JCM 12360 / KCTC 9906 / NCIMB 13794 / A6) (Arthrobacter chlorophenolicus).